The sequence spans 149 residues: Calmodulin (149 aa).

Alanine 2 bears the N-acetylalanine mark. EF-hand domains are found at residues 8-43 (EQIAEFKEAFSLFDKDGDGSITTKELGTVMRSLGQN), 44-79 (PTEAELQDMINEVDADGNGTIDFPEFLNLMARKMKD), 81-116 (DSEEELKEAFKVFDKDQNGYISAADWRHVMTNLGEK), and 117-149 (LTDEEVDEMIREADVDGDGQVNYEEFVKMMMAK). Aspartate 21, aspartate 23, aspartate 25, serine 27, glutamate 32, aspartate 57, aspartate 59, asparagine 61, threonine 63, glutamate 68, aspartate 94, aspartate 96, asparagine 98, tyrosine 100, and aspartate 105 together coordinate Ca(2+). Lysine 116 is subject to N6,N6,N6-trimethyllysine. Ca(2+) contacts are provided by aspartate 130, aspartate 132, aspartate 134, glutamine 136, and glutamate 141.

The protein belongs to the calmodulin family.

In terms of biological role, calmodulin mediates the control of a large number of enzymes, ion channels and other proteins by Ca(2+). Among the enzymes to be stimulated by the calmodulin-Ca(2+) complex are a number of protein kinases and phosphatases. This Mougeotia scalaris (Green alga) protein is Calmodulin.